The chain runs to 309 residues: HPr kinase/phosphorylase (309 aa).

Catalysis depends on residues His138 and Lys159. An ATP-binding site is contributed by 153 to 160 (GQSGVGKS). Ser160 is a Mg(2+) binding site. Residue Asp177 is the Proton acceptor; for phosphorylation activity. Proton donor; for dephosphorylation activity of the active site. The interval 201–210 (LEIRGLGIIN) is important for the catalytic mechanism of both phosphorylation and dephosphorylation. Glu202 is a binding site for Mg(2+). Residue Arg243 is part of the active site. Residues 264–269 (PVRPGR) are important for the catalytic mechanism of dephosphorylation.

The protein belongs to the HPrK/P family. In terms of assembly, homohexamer. The cofactor is Mg(2+).

It catalyses the reaction [HPr protein]-L-serine + ATP = [HPr protein]-O-phospho-L-serine + ADP + H(+). The catalysed reaction is [HPr protein]-O-phospho-L-serine + phosphate + H(+) = [HPr protein]-L-serine + diphosphate. Functionally, catalyzes the ATP- as well as the pyrophosphate-dependent phosphorylation of a specific serine residue in HPr, a phosphocarrier protein of the phosphoenolpyruvate-dependent sugar phosphotransferase system (PTS). HprK/P also catalyzes the pyrophosphate-producing, inorganic phosphate-dependent dephosphorylation (phosphorolysis) of seryl-phosphorylated HPr (P-Ser-HPr). The two antagonistic activities of HprK/P are regulated by several intracellular metabolites, which change their concentration in response to the absence or presence of rapidly metabolisable carbon sources (glucose, fructose, etc.) in the growth medium. Also phosphorylates/dephosphorylates the HPr-like catabolite repression protein crh on a specific serine residue. Therefore, by controlling the phosphorylation state of HPr and crh, HPrK/P is a sensor enzyme that plays a major role in the regulation of carbon metabolism and sugar transport: it mediates carbon catabolite repression (CCR), and regulates PTS-catalyzed carbohydrate uptake and inducer exclusion. The sequence is that of HPr kinase/phosphorylase from Bacillus cytotoxicus (strain DSM 22905 / CIP 110041 / 391-98 / NVH 391-98).